The following is a 926-amino-acid chain: Protein translocase subunit SecA (926 aa).

Residues Gln-87, 105-109, and Asp-512 each bind ATP; that span reads GEGKT. Cys-911, Cys-913, Cys-922, and His-923 together coordinate Zn(2+).

Belongs to the SecA family. In terms of assembly, monomer and homodimer. Part of the essential Sec protein translocation apparatus which comprises SecA, SecYEG and auxiliary proteins SecDF-YajC and YidC. Zn(2+) serves as cofactor.

The protein resides in the cell inner membrane. The protein localises to the cytoplasm. It carries out the reaction ATP + H2O + cellular proteinSide 1 = ADP + phosphate + cellular proteinSide 2.. In terms of biological role, part of the Sec protein translocase complex. Interacts with the SecYEG preprotein conducting channel. Has a central role in coupling the hydrolysis of ATP to the transfer of proteins into and across the cell membrane, serving both as a receptor for the preprotein-SecB complex and as an ATP-driven molecular motor driving the stepwise translocation of polypeptide chains across the membrane. This chain is Protein translocase subunit SecA, found in Psychrobacter cryohalolentis (strain ATCC BAA-1226 / DSM 17306 / VKM B-2378 / K5).